We begin with the raw amino-acid sequence, 282 residues long: Bis(5'-nucleosyl)-tetraphosphatase, symmetrical (282 aa).

The protein belongs to the Ap4A hydrolase family.

The enzyme catalyses P(1),P(4)-bis(5'-adenosyl) tetraphosphate + H2O = 2 ADP + 2 H(+). In terms of biological role, hydrolyzes diadenosine 5',5'''-P1,P4-tetraphosphate to yield ADP. The chain is Bis(5'-nucleosyl)-tetraphosphatase, symmetrical from Salmonella agona (strain SL483).